Consider the following 372-residue polypeptide: Alanine racemase (372 aa).

Lysine 33 acts as the Proton acceptor; specific for D-alanine in catalysis. Position 33 is an N6-(pyridoxal phosphate)lysine (lysine 33). Arginine 131 contacts substrate. Tyrosine 261 serves as the catalytic Proton acceptor; specific for L-alanine. Methionine 309 is a binding site for substrate.

The protein belongs to the alanine racemase family. Pyridoxal 5'-phosphate is required as a cofactor.

The enzyme catalyses L-alanine = D-alanine. It participates in amino-acid biosynthesis; D-alanine biosynthesis; D-alanine from L-alanine: step 1/1. Catalyzes the interconversion of L-alanine and D-alanine. May also act on other amino acids. The protein is Alanine racemase (alr) of Salinispora tropica (strain ATCC BAA-916 / DSM 44818 / JCM 13857 / NBRC 105044 / CNB-440).